Consider the following 338-residue polypeptide: Methionyl-tRNA formyltransferase (338 aa).

Position 110 to 113 (110 to 113 (SLLP)) interacts with (6S)-5,6,7,8-tetrahydrofolate.

Belongs to the Fmt family.

It catalyses the reaction L-methionyl-tRNA(fMet) + (6R)-10-formyltetrahydrofolate = N-formyl-L-methionyl-tRNA(fMet) + (6S)-5,6,7,8-tetrahydrofolate + H(+). Functionally, attaches a formyl group to the free amino group of methionyl-tRNA(fMet). The formyl group appears to play a dual role in the initiator identity of N-formylmethionyl-tRNA by promoting its recognition by IF2 and preventing the misappropriation of this tRNA by the elongation apparatus. In Parasynechococcus marenigrum (strain WH8102), this protein is Methionyl-tRNA formyltransferase.